We begin with the raw amino-acid sequence, 240 residues long: UDP-2,3-diacylglucosamine hydrolase (240 aa).

The Mn(2+) site is built by Asp-8, His-10, Asp-41, Asn-78, and His-113. 78-79 lines the substrate pocket; sequence NR. Positions 121, 159, 163, 166, and 194 each coordinate substrate. Mn(2+) contacts are provided by His-194 and His-196.

It belongs to the LpxH family. It depends on Mn(2+) as a cofactor.

The protein resides in the cell inner membrane. It carries out the reaction UDP-2-N,3-O-bis[(3R)-3-hydroxytetradecanoyl]-alpha-D-glucosamine + H2O = 2-N,3-O-bis[(3R)-3-hydroxytetradecanoyl]-alpha-D-glucosaminyl 1-phosphate + UMP + 2 H(+). It functions in the pathway glycolipid biosynthesis; lipid IV(A) biosynthesis; lipid IV(A) from (3R)-3-hydroxytetradecanoyl-[acyl-carrier-protein] and UDP-N-acetyl-alpha-D-glucosamine: step 4/6. Its function is as follows. Hydrolyzes the pyrophosphate bond of UDP-2,3-diacylglucosamine to yield 2,3-diacylglucosamine 1-phosphate (lipid X) and UMP by catalyzing the attack of water at the alpha-P atom. Involved in the biosynthesis of lipid A, a phosphorylated glycolipid that anchors the lipopolysaccharide to the outer membrane of the cell. This chain is UDP-2,3-diacylglucosamine hydrolase, found in Shewanella baltica (strain OS155 / ATCC BAA-1091).